A 1320-amino-acid chain; its full sequence is CAP-Gly domain-containing linker protein 1 (1320 aa).

A disordered region spans residues 1-53; it reads MSMLKPSGLKAPTKILKPGSTALKTPAAAAAPLEKTVPSEKASGPPSSETQEE. Low complexity predominate over residues 21–35; that stretch reads TALKTPAAAAAPLEK. The residue at position 48 (Ser-48) is a Phosphoserine. Position 50 is a phosphothreonine (Thr-50). In terms of domain architecture, CAP-Gly 1 spans 78-120; that stretch reads GETQFAPGQWAGIVLDEPIGKNDGSVAGVRYFQCEPLKGIFTR. An important for tubulin binding region spans residues 97–101; it reads GKNDG. Ser-146 is subject to Phosphoserine. Polar residues predominate over residues 156–171; that stretch reads VSSSPATPSNIPQKPS. The tract at residues 156-181 is disordered; sequence VSSSPATPSNIPQKPSQPVAKETSAT. Position 181 is a phosphothreonine (Thr-181). Ser-194, Ser-196, Ser-199, and Ser-203 each carry phosphoserine. The 43-residue stretch at 231-273 folds into the CAP-Gly 2 domain; it reads GETDFAKGEWCGVELDEPLGKNDGAVAGTRYFQCQPKYGLFAP. The segment covering 301–331 has biased composition (low complexity); the sequence is TTPASLKRSPSASSLSSMSSVASSVSSKPSR. Residues 301-338 form a disordered region; sequence TTPASLKRSPSASSLSSMSSVASSVSSKPSRTGLLTET. Residue Ser-309 is modified to Phosphoserine. Ser-311 is modified (phosphoserine; by PKA). Ser-314 and Ser-347 each carry phosphoserine. The disordered stretch occupies residues 1089–1109; the sequence is SLPSNTLRESEYRKDADEEKA. Residues 1096–1109 show a composition bias toward basic and acidic residues; that stretch reads RESEYRKDADEEKA. Phosphoserine is present on Ser-1116. The tract at residues 1178 to 1201 is disordered; that stretch reads KRQLSSSSGNTDVQTEEDERAQES. Positions 1180 to 1190 are enriched in polar residues; it reads QLSSSSGNTDV. Ser-1246 carries the phosphoserine modification. A CCHC-type zinc finger spans residues 1299-1316; the sequence is PYCEICEMFGHWATNCND.

Interacts with MTOR; phosphorylates and regulates CLIP1. Interacts (via CAP-Gly domains) with tubulin and TUBA1B. Interacts with SLAIN2. Interacts with MAPRE1 and MAPRE3. Interacts (via zinc finger) with DCTN1. Binds preferentially to tyrosinated microtubules, and only marginally to detyrosinated microtubules. In terms of processing, phosphorylated. Phosphorylation induces conformational changes by increasing the affinity of the N-terminus for C-terminus, resulting in inhibition of its function thus decreasing its binding to microtubules and DCTN1. Exhibits a folded, autoinhibited conformation when phosphorylated and an open conformation when dephosphorylated with increased binding affinity to microtubules and DCTN1. Phosphorylation regulates its recruitment to tyrosinated microtubules and the recruitment of vesicular cargo to microtubules in neurons. Phosphorylation by MTOR may positively regulate CLIP1 association with microtubules.

It localises to the cytoplasm. It is found in the cytoskeleton. The protein localises to the cytoplasmic vesicle membrane. Its subcellular location is the cell projection. The protein resides in the ruffle. In terms of biological role, binds to the plus end of microtubules and regulates the dynamics of the microtubule cytoskeleton. Promotes microtubule growth and microtubule bundling. Links cytoplasmic vesicles to microtubules and thereby plays an important role in intracellular vesicle trafficking. Plays a role macropinocytosis and endosome trafficking. In Rattus norvegicus (Rat), this protein is CAP-Gly domain-containing linker protein 1 (Clip1).